Reading from the N-terminus, the 193-residue chain is Ion-translocating oxidoreductase complex subunit A (193 aa).

Transmembrane regions (helical) follow at residues 5 to 25, 47 to 67, 72 to 92, 102 to 122, 134 to 154, and 171 to 191; these read LLLFVGTVLVNNFVLVKFLGL, FVMTLASICAWLIDTWILIPL, LRTMAFILVIAVVVQFTEMVV, LLGIFLPLITTNCAVLGVALL, ALYGFSAAVGFSLVMVLFAAI, and AIALITAGLMSLAFMGFSGLV.

The protein belongs to the NqrDE/RnfAE family. As to quaternary structure, the complex is composed of six subunits: RsxA, RsxB, RsxC, RsxD, RsxE and RsxG.

The protein localises to the cell inner membrane. In terms of biological role, part of a membrane-bound complex that couples electron transfer with translocation of ions across the membrane. Required to maintain the reduced state of SoxR. The chain is Ion-translocating oxidoreductase complex subunit A from Escherichia coli O45:K1 (strain S88 / ExPEC).